The following is a 331-amino-acid chain: Phosphoenolpyruvate transferase (331 aa).

Residue aspartate 63 participates in 7,8-didemethyl-8-hydroxy-5-deazariboflavin binding.

The protein belongs to the CofD family. Homodimer. It depends on Mg(2+) as a cofactor.

It carries out the reaction enolpyruvoyl-2-diphospho-5'-guanosine + 7,8-didemethyl-8-hydroxy-5-deazariboflavin = dehydro coenzyme F420-0 + GMP + H(+). It participates in cofactor biosynthesis; coenzyme F420 biosynthesis. Functionally, catalyzes the transfer of the phosphoenolpyruvate moiety from enoylpyruvoyl-2-diphospho-5'-guanosine (EPPG) to 7,8-didemethyl-8-hydroxy-5-deazariboflavin (FO) with the formation of dehydro coenzyme F420-0 and GMP. This Mycobacterium sp. (strain KMS) protein is Phosphoenolpyruvate transferase.